The following is a 729-amino-acid chain: ATP-dependent RNA helicase DHX15 homolog (729 aa).

Residues 1–25 (MSKRRIEVGETYGSKAKKDPEASSS) are disordered. The region spanning 82-246 (MRLLSLHQCI…FDNAPLMKVP (165 aa)) is the Helicase ATP-binding domain. 95 to 102 (GETGSGKT) is a binding site for ATP. A DEAH box motif is present at residues 193–196 (DEAH). Residues 271–451 (TVIQIHMCEE…TVVLQLKKLG (181 aa)) enclose the Helicase C-terminal domain.

Belongs to the DEAD box helicase family. DEAH subfamily. DDX15/PRP43 sub-subfamily.

It catalyses the reaction ATP + H2O = ADP + phosphate + H(+). Functionally, RNA helicase involved in mRNA processing and antiviral innate immunity. Acts as an activator of the p38 MAPK cascade. This is ATP-dependent RNA helicase DHX15 homolog from Drosophila melanogaster (Fruit fly).